Consider the following 210-residue polypeptide: Phosphoribosyl-dephospho-CoA transferase (210 aa).

Catalysis depends on residues Asp135 and Asp137.

It belongs to the MdcG family.

The enzyme catalyses apo-[malonate decarboxylase ACP] + 2'-(5''-triphospho-alpha-D-ribosyl)-3'-dephospho-CoA = holo-[malonate decarboxylase ACP] + diphosphate. Functionally, transfers 2'-(5-triphosphoribosyl)-3'-dephosphocoenzyme-A to the apo-[acyl-carrier-protein] of the malonate decarboxylase to yield holo-[acyl-carrier-protein]. In Pseudomonas aeruginosa (strain ATCC 15692 / DSM 22644 / CIP 104116 / JCM 14847 / LMG 12228 / 1C / PRS 101 / PAO1), this protein is Phosphoribosyl-dephospho-CoA transferase.